Here is a 114-residue protein sequence, read N- to C-terminus: UPF0102 protein jhp_0762 (114 aa).

This sequence belongs to the UPF0102 family.

This is UPF0102 protein jhp_0762 from Helicobacter pylori (strain J99 / ATCC 700824) (Campylobacter pylori J99).